The primary structure comprises 378 residues: Chaperone protein DnaJ (378 aa).

Residues 5-70 (DYYEVLSVGR…DKKAAYDQFG (66 aa)) enclose the J domain. The segment at 133–211 (GLTKELRIPT…CHGEGRVEKS (79 aa)) adopts a CR-type zinc-finger fold. Zn(2+)-binding residues include C146, C149, C163, C166, C185, C188, C199, and C202. CXXCXGXG motif repeat units follow at residues 146 to 153 (CDTCDGSG), 163 to 170 (CGTCHGQG), 185 to 192 (CPTCHGRG), and 199 to 206 (CNSCHGEG).

The protein belongs to the DnaJ family. As to quaternary structure, homodimer. It depends on Zn(2+) as a cofactor.

The protein localises to the cytoplasm. Functionally, participates actively in the response to hyperosmotic and heat shock by preventing the aggregation of stress-denatured proteins and by disaggregating proteins, also in an autonomous, DnaK-independent fashion. Unfolded proteins bind initially to DnaJ; upon interaction with the DnaJ-bound protein, DnaK hydrolyzes its bound ATP, resulting in the formation of a stable complex. GrpE releases ADP from DnaK; ATP binding to DnaK triggers the release of the substrate protein, thus completing the reaction cycle. Several rounds of ATP-dependent interactions between DnaJ, DnaK and GrpE are required for fully efficient folding. Also involved, together with DnaK and GrpE, in the DNA replication of plasmids through activation of initiation proteins. The polypeptide is Chaperone protein DnaJ (Shewanella woodyi (strain ATCC 51908 / MS32)).